The chain runs to 436 residues: Ribosome biogenesis protein WDR12 homolog (436 aa).

The interval 13-97 (VRVRFLTKLP…ERVLELEYVK (85 aa)) is ubiquitin-like (UBL) domain. 7 WD repeats span residues 109–147 (PHDD…THIL), 149–193 (GHSD…SVPK), 203–242 (GHTS…EDGD), 273–311 (GHTQ…ETWN), 313–353 (VSGK…TLAP), 359–399 (SHKS…PLAS), and 402–436 (SHKD…IEIV). Positions 240-262 (DGDTVSVKKRRTNSDSSGPEESL) are disordered.

It belongs to the WD repeat WDR12/YTM1 family.

The protein resides in the nucleus. It localises to the nucleolus. It is found in the nucleoplasm. Required for maturation of ribosomal RNAs and formation of the large ribosomal subunit. This chain is Ribosome biogenesis protein WDR12 homolog, found in Oryza sativa subsp. japonica (Rice).